Reading from the N-terminus, the 351-residue chain is Soluble TNF receptor II (351 aa).

An N-terminal signal peptide occupies residues 1 to 19 (MKSVLYSYILFLSCIIING). 2 TNFR-Cys repeats span residues 31–67 (KCKDNEYNRHNLCCLSCPPGTYASRLCDSKTNTNTQC) and 69–110 (PCGS…NRIC). 6 cysteine pairs are disulfide-bonded: C32/C43, C44/C57, C47/C67, C70/C85, C88/C102, and C92/C110. Residues N103, N191, and N250 are each glycosylated (N-linked (GlcNAc...) asparagine; by host).

It belongs to the orthopoxvirus OPG002 family.

It localises to the secreted. Its function is as follows. Inhibits host immune defense by binding to host TNF and various chemokines in the extracellular space. Binds host CC chemokines (beta chemokines) and CXC chemokines (alpha chemokines). This is Soluble TNF receptor II (OPG002) from Bos taurus (Bovine).